Here is a 139-residue protein sequence, read N- to C-terminus: uncharacterized protein (139 aa).

The interval 54–75 (NSLHRHGDQAWGKHRRQNSLKS) is disordered.

This is an uncharacterized protein from Homo sapiens (Human).